The primary structure comprises 141 residues: Hemoglobin subunit alpha (141 aa).

Residues Val1–Arg141 form the Globin domain. Position 3 is a phosphoserine (Ser3). Lys7 is modified (N6-succinyllysine). Phosphothreonine is present on Thr8. At Lys11 the chain carries N6-succinyllysine. N6-acetyllysine; alternate is present on Lys16. Lys16 bears the N6-succinyllysine; alternate mark. Tyr24 is modified (phosphotyrosine). Residue Ser35 is modified to Phosphoserine. Position 40 is an N6-succinyllysine (Lys40). The residue at position 49 (Ser49) is a Phosphoserine. His58 lines the O2 pocket. His87 serves as a coordination point for heme b. Position 102 is a phosphoserine (Ser102). Thr108 carries the post-translational modification Phosphothreonine. A phosphoserine mark is found at Ser124 and Ser131. Phosphothreonine is present on residues Thr134 and Thr137. Ser138 carries the post-translational modification Phosphoserine.

It belongs to the globin family. As to quaternary structure, heterotetramer of two alpha chains and two beta chains. As to expression, red blood cells.

Its function is as follows. Involved in oxygen transport from the lung to the various peripheral tissues. Functionally, hemopressin acts as an antagonist peptide of the cannabinoid receptor CNR1. Hemopressin-binding efficiently blocks cannabinoid receptor CNR1 and subsequent signaling. This chain is Hemoglobin subunit alpha (HBA), found in Rousettus aegyptiacus (Egyptian fruit bat).